Reading from the N-terminus, the 213-residue chain is ATP phosphoribosyltransferase (213 aa).

This sequence belongs to the ATP phosphoribosyltransferase family. Short subfamily. As to quaternary structure, heteromultimer composed of HisG and HisZ subunits.

Its subcellular location is the cytoplasm. It catalyses the reaction 1-(5-phospho-beta-D-ribosyl)-ATP + diphosphate = 5-phospho-alpha-D-ribose 1-diphosphate + ATP. The protein operates within amino-acid biosynthesis; L-histidine biosynthesis; L-histidine from 5-phospho-alpha-D-ribose 1-diphosphate: step 1/9. Catalyzes the condensation of ATP and 5-phosphoribose 1-diphosphate to form N'-(5'-phosphoribosyl)-ATP (PR-ATP). Has a crucial role in the pathway because the rate of histidine biosynthesis seems to be controlled primarily by regulation of HisG enzymatic activity. This chain is ATP phosphoribosyltransferase, found in Shouchella clausii (strain KSM-K16) (Alkalihalobacillus clausii).